Reading from the N-terminus, the 761-residue chain is 5-methyltetrahydropteroyltriglutamate--homocysteine methyltransferase (761 aa).

5-methyltetrahydropteroyltri-L-glutamate is bound by residues 16 to 19 and Lys116; that span reads RELK. L-homocysteine contacts are provided by residues 437-439 and Glu490; that span reads IGS. L-methionine-binding positions include 437–439 and Glu490; that span reads IGS. 5-methyltetrahydropteroyltri-L-glutamate is bound by residues 521–522 and Trp567; that span reads RC. An L-homocysteine-binding site is contributed by Asp605. Position 605 (Asp605) interacts with L-methionine. Position 611 (Glu611) interacts with 5-methyltetrahydropteroyltri-L-glutamate. Zn(2+) contacts are provided by His647, Cys649, and Glu671. His700 (proton donor) is an active-site residue. Cys732 lines the Zn(2+) pocket.

Belongs to the vitamin-B12 independent methionine synthase family. Zn(2+) is required as a cofactor.

It catalyses the reaction 5-methyltetrahydropteroyltri-L-glutamate + L-homocysteine = tetrahydropteroyltri-L-glutamate + L-methionine. The protein operates within amino-acid biosynthesis; L-methionine biosynthesis via de novo pathway; L-methionine from L-homocysteine (MetE route): step 1/1. Its function is as follows. Catalyzes the transfer of a methyl group from 5-methyltetrahydrofolate to homocysteine resulting in methionine formation. The polypeptide is 5-methyltetrahydropteroyltriglutamate--homocysteine methyltransferase (Chromohalobacter salexigens (strain ATCC BAA-138 / DSM 3043 / CIP 106854 / NCIMB 13768 / 1H11)).